The primary structure comprises 187 residues: UPF0301 protein CT0663 (187 aa).

This sequence belongs to the UPF0301 (AlgH) family.

This chain is UPF0301 protein CT0663, found in Chlorobaculum tepidum (strain ATCC 49652 / DSM 12025 / NBRC 103806 / TLS) (Chlorobium tepidum).